A 230-amino-acid chain; its full sequence is Ureidoacrylate amidohydrolase RutB (230 aa).

The active-site Proton acceptor is D24. The active site involves K133. C166 functions as the Nucleophile in the catalytic mechanism.

Belongs to the isochorismatase family. RutB subfamily.

The catalysed reaction is (Z)-3-ureidoacrylate + H2O + H(+) = (Z)-3-aminoacrylate + NH4(+) + CO2. It catalyses the reaction (Z)-3-ureidoacrylate + H2O = (Z)-3-aminoacrylate + carbamate + H(+). The enzyme catalyses (Z)-2-methylureidoacrylate + H2O + H(+) = (Z)-2-methylaminoacrylate + NH4(+) + CO2. Functionally, hydrolyzes ureidoacrylate to form aminoacrylate and carbamate. The carbamate hydrolyzes spontaneously, thereby releasing one of the nitrogen atoms of the pyrimidine ring as ammonia and one of its carbon atoms as CO2. This is Ureidoacrylate amidohydrolase RutB from Escherichia coli O103:H2 (strain 12009 / EHEC).